The primary structure comprises 493 residues: MNREEFLRLAAVGYNRIPLACETLADFDTPLSIYLKLADQPNSYLLESVQGGEKWGRYSMIGLPSRTVMRVHGYHVSILHDGVEVESHDVEDPLAFVESFKDRYKVADIPGLPRFNGGLVGYFGYDCVRYVEKRLGVSPNPDPLGVPDILLMVSDAVVVFDNLAGKMHAIVLVDPAEEQAFEQGQARLQGLLETLRQPITPRRGLDLSGPQAAEPEFRSSYTREDYENAVGRIKEYILAGDCMQVVPSQRMSIDFKAAPIDLYRALRCFNPTPYMYFFNFGDFHVVGSSPEVLVRVEDNLVTVRPIAGTRPRGATEEADRALEDDLLSDDKEIAEHLMLIDLGRNDVGRVSSTGSVRLTEKMVIERYSNVMHIVSNVAGQLREGLTAMDALRAILPAGTLSGAPKIRAMEIIDELEPVKRGVYGGAVGYFAWNGNMDTAIAIRTAVINDGELHVQAGGGIVADSVPALEWEETINKRRAMFRAVALAEQTSAK.

Residues Ser-48 and 273–275 each bind L-tryptophan; that span reads PYM. 308–309 provides a ligand contact to chorismate; that stretch reads GT. Mg(2+) is bound at residue Glu-335. Residues Tyr-423, Arg-443, 457–459, and Gly-459 contribute to the chorismate site; that span reads GGG. Mg(2+) is bound at residue Glu-472.

The protein belongs to the anthranilate synthase component I family. Heterotetramer consisting of two non-identical subunits: a beta subunit (TrpG) and a large alpha subunit (TrpE). It depends on Mg(2+) as a cofactor.

It catalyses the reaction chorismate + L-glutamine = anthranilate + pyruvate + L-glutamate + H(+). The protein operates within amino-acid biosynthesis; L-tryptophan biosynthesis; L-tryptophan from chorismate: step 1/5. Its activity is regulated as follows. Feedback inhibited by tryptophan. Functionally, part of a heterotetrameric complex that catalyzes the two-step biosynthesis of anthranilate, an intermediate in the biosynthesis of L-tryptophan. In the first step, the glutamine-binding beta subunit (TrpG) of anthranilate synthase (AS) provides the glutamine amidotransferase activity which generates ammonia as a substrate that, along with chorismate, is used in the second step, catalyzed by the large alpha subunit of AS (TrpE) to produce anthranilate. In the absence of TrpG, TrpE can synthesize anthranilate directly from chorismate and high concentrations of ammonia. The chain is Anthranilate synthase component 1 (trpE) from Pseudomonas putida (Arthrobacter siderocapsulatus).